Consider the following 560-residue polypeptide: Dihydroxy-acid dehydratase (560 aa).

C50 provides a ligand contact to [2Fe-2S] cluster. D82 contacts Mg(2+). A [2Fe-2S] cluster-binding site is contributed by C123. Residues D124 and K125 each coordinate Mg(2+). K125 carries the N6-carboxylysine modification. C195 lines the [2Fe-2S] cluster pocket. A Mg(2+)-binding site is contributed by E447. The Proton acceptor role is filled by S473.

The protein belongs to the IlvD/Edd family. As to quaternary structure, homodimer. [2Fe-2S] cluster is required as a cofactor. The cofactor is Mg(2+).

The enzyme catalyses (2R)-2,3-dihydroxy-3-methylbutanoate = 3-methyl-2-oxobutanoate + H2O. The catalysed reaction is (2R,3R)-2,3-dihydroxy-3-methylpentanoate = (S)-3-methyl-2-oxopentanoate + H2O. It functions in the pathway amino-acid biosynthesis; L-isoleucine biosynthesis; L-isoleucine from 2-oxobutanoate: step 3/4. The protein operates within amino-acid biosynthesis; L-valine biosynthesis; L-valine from pyruvate: step 3/4. Functions in the biosynthesis of branched-chain amino acids. Catalyzes the dehydration of (2R,3R)-2,3-dihydroxy-3-methylpentanoate (2,3-dihydroxy-3-methylvalerate) into 2-oxo-3-methylpentanoate (2-oxo-3-methylvalerate) and of (2R)-2,3-dihydroxy-3-methylbutanoate (2,3-dihydroxyisovalerate) into 2-oxo-3-methylbutanoate (2-oxoisovalerate), the penultimate precursor to L-isoleucine and L-valine, respectively. The chain is Dihydroxy-acid dehydratase from Thermosynechococcus vestitus (strain NIES-2133 / IAM M-273 / BP-1).